A 504-amino-acid polypeptide reads, in one-letter code: Pre-mRNA-processing factor 19 (504 aa).

Residue serine 2 is modified to N-acetylserine. Positions 2 to 73 (SLICSISNEV…KPPSATSIPA (72 aa)) constitute a U-box domain. A may mediate interaction with PSMC5 region spans residues 68–223 (ATSIPAILKA…VGLHSASIPG (156 aa)). 4 positions are modified to N6-acetyllysine: lysine 122, lysine 179, lysine 244, and lysine 261. Residues 219 to 259 (ASIPGILALDLCPSDTNKILTGGADKNVVVFDKSSEQILAT) form a WD 1 repeat. WD repeat units follow at residues 262–301 (GHTK…CVQV), 304–345 (AHES…TKVT), 348–387 (TSGC…NVAN), 390–429 (GHSG…NFKT), 433–472 (DNNF…LHFT), and 473–503 (EHSG…KFYS).

Belongs to the WD repeat PRP19 family. Homotetramer. Component of activated, catalytic and post-catalytic spliceosomes. Component of the Prp19 complex/PRP19C/Nineteen complex/NTC and related complexes described as PRP19-CDC5L splicing complex and PSO4 complex. A homotetramer of PRPF19, CDC5L, PLRG1 and BCAS2 constitute the core of those complexes. The interaction with CDC5L, PLRG1 and BCAS2 is direct within this core complex. At least three less stably associated proteins CTNNBL1, CWC15 and HSPA8 are found in the Prp19 complex. The Prp19 complex associates with the spliceosome during its assembly and remodeling recruiting additional proteins. Component of the XAB2 complex, a multimeric protein complex composed of XAB2, PRPF19, AQR, ZNF830, ISY1, and PPIE. Interacts with CWC22 and EIF4A3 in an RNA-independent manner. Interacts with RPA1 and RPA2; the PRP19-CDC5L complex is recruited to the sites of DNA repair where it interacts with the replication protein A complex (RPA). Interacts with SETMAR; required for SETMAR recruitment to site of DNA damage. Interacts with U2AF2; the interaction is direct and recruits the Prp19 complex to RNA polymerase II C-terminal domain (CTD) and the pre-mRNA. Interacts with PRPF3. Interacts with APEX1, DNTT and PSMB4. Interacts with PSMC5. Interacts with KNSTRN. Interacts (via N-terminus) with CDC5L. Interacts with KHDC4. Interacts with USB1. Interacts with DDX41.

Its subcellular location is the nucleus. The protein resides in the nucleoplasm. The protein localises to the cytoplasm. It is found in the cytoskeleton. It localises to the spindle. Its subcellular location is the lipid droplet. It carries out the reaction S-ubiquitinyl-[E2 ubiquitin-conjugating enzyme]-L-cysteine + [acceptor protein]-L-lysine = [E2 ubiquitin-conjugating enzyme]-L-cysteine + N(6)-ubiquitinyl-[acceptor protein]-L-lysine.. It functions in the pathway protein modification; protein ubiquitination. In terms of biological role, ubiquitin-protein ligase which is a core component of several complexes mainly involved pre-mRNA splicing and DNA repair. Required for pre-mRNA splicing as component of the spliceosome. Core component of the PRP19C/Prp19 complex/NTC/Nineteen complex which is part of the spliceosome and participates in its assembly, its remodeling and is required for its activity. During assembly of the spliceosome, mediates 'Lys-63'-linked polyubiquitination of the U4 spliceosomal protein PRPF3. Ubiquitination of PRPF3 allows its recognition by the U5 component PRPF8 and stabilizes the U4/U5/U6 tri-snRNP spliceosomal complex. Recruited to RNA polymerase II C-terminal domain (CTD) and the pre-mRNA, it may also couple the transcriptional and spliceosomal machineries. The XAB2 complex, which contains PRPF19, is also involved in pre-mRNA splicing, transcription and transcription-coupled repair. Beside its role in pre-mRNA splicing PRPF19, as part of the PRP19-CDC5L complex, plays a role in the DNA damage response/DDR. It is recruited to the sites of DNA damage by the RPA complex where PRPF19 directly ubiquitinates RPA1 and RPA2. 'Lys-63'-linked polyubiquitination of the RPA complex allows the recruitment of the ATR-ATRIP complex and the activation of ATR, a master regulator of the DNA damage response. May also play a role in DNA double-strand break (DSB) repair by recruiting the repair factor SETMAR to altered DNA. As part of the PSO4 complex may also be involved in the DNA interstrand cross-links/ICLs repair process. In addition, may also mediate 'Lys-48'-linked polyubiquitination of substrates and play a role in proteasomal degradation. May play a role in the biogenesis of lipid droplets. May play a role in neural differentiation possibly through its function as part of the spliceosome. In Bos taurus (Bovine), this protein is Pre-mRNA-processing factor 19 (PRPF19).